A 618-amino-acid polypeptide reads, in one-letter code: MLTEALEGQLTVVYNTVAASVQVQVEPVGRWFEAFLKRRNRNVSASFQELEEEEELSEEEEDEELQLEEYPMLKTLDPKDWKNQDHYAVLGLAHVRYKATQKQIKAAHKAMVLKHHPDKRKAAGEQIVEGDNDYFTCITKAIEILSDPVKRRAFDSVDPTFDNAVPTKAEGKENFFEVFAPVFERNARWSVKKHFPSLGTMESSFEDVDNFYSFWYNFDSWREFSYLDEEEKEKAECRDERRWIEKQNRASRAQRKKEEMNRIRTLVDTAYNADPRIKKFKEEEKARKESEKKAKVEAKKREQEEKERARQQQEEAARLLKEQQEEAARQAAQQAKKEKEAQKKAIKKERQKLRMTCKSQNYFTDNEADSVRMMEEVEKLCDRLELISLQTLNEALSAGNKEQSKAALEKQVQEVNMQLQKEKDAELQAQQAARGSEHSSAAGGQNNRGWSEEDLQLLIKAVNLFPAGTNARWEVIANYMNQHSSSGVRRTAKDVINKAKTLQKLDPHQKDEINRKAFEKFKKEHSAVPPTVDNAMPSERFDAVGADSNAAAWTTEEQKLLEQALKTYPVSTAERWERISEAVPGRSKKDCMKRYKELVEMIKAKKAAQEQVAAKNKK.

In terms of domain architecture, J spans 85–158 (DHYAVLGLAH…VKRRAFDSVD (74 aa)). 3 disordered regions span residues 281–315 (KEEEKARKESEKKAKVEAKKREQEEKERARQQQEE), 330–349 (QAAQQAKKEKEAQKKAIKKE), and 419–448 (LQKEKDAELQAQQAARGSEHSSAAGGQNNR). Over residues 428–448 (QAQQAARGSEHSSAAGGQNNR) the composition is skewed to polar residues. SANT domains lie at 445–507 (QNNR…KLDP) and 548–603 (SNAA…EMIK).

Component of ribosome-associated complex (RAC).

It is found in the nucleus. The protein resides in the cytoplasm. It localises to the cytosol. Its function is as follows. Acts both as a chaperone in the cytosol and as a chromatin regulator in the nucleus. When cytosolic, acts as a molecular chaperone: component of the ribosome-associated complex (RAC), a complex involved in folding or maintaining nascent polypeptides in a folding-competent state. When nuclear, mediates the switching from polycomb-repressed genes to an active state: specifically recruited at histone H2A ubiquitinated at 'Lys-119' (H2AK119ub), and promotes the displacement of the polycomb PRC1 complex from chromatin, thereby facilitating transcription activation. The protein is DnaJ homolog subfamily C member 2 (dnajc2) of Danio rerio (Zebrafish).